A 381-amino-acid chain; its full sequence is Putative steryl acetyl hydrolase mug81 (381 aa).

The Cytoplasmic portion of the chain corresponds to 1–9 (MISLSLLYR). The chain crosses the membrane as a helical; Signal-anchor for type II membrane protein span at residues 10-30 (ILTLPIILVGTTILYFTIGTN). Topologically, residues 31 to 381 (FPHDELRHNL…YTFLRETFEE (351 aa)) are lumenal. An Involved in the stabilization of the negatively charged intermediate by the formation of the oxyanion hole motif is present at residues 125-127 (HGG). Asn-193 carries N-linked (GlcNAc...) asparagine glycosylation. Ser-200 is a catalytic residue.

Belongs to the 'GDXG' lipolytic enzyme family.

It is found in the cytoplasm. Its subcellular location is the endoplasmic reticulum membrane. In terms of biological role, required for the deacetylation of acetylated sterols. Has a role in meiosis. In Schizosaccharomyces pombe (strain 972 / ATCC 24843) (Fission yeast), this protein is Putative steryl acetyl hydrolase mug81 (mug180).